The sequence spans 367 residues: tRNA/tmRNA (uracil-C(5))-methyltransferase (367 aa).

5 residues coordinate S-adenosyl-L-methionine: Gln190, Tyr218, Asn223, Glu239, and Asp299. Residue Cys324 is the Nucleophile of the active site. Residue Glu358 is the Proton acceptor of the active site.

Belongs to the class I-like SAM-binding methyltransferase superfamily. RNA M5U methyltransferase family. TrmA subfamily.

It carries out the reaction uridine(54) in tRNA + S-adenosyl-L-methionine = 5-methyluridine(54) in tRNA + S-adenosyl-L-homocysteine + H(+). The enzyme catalyses uridine(341) in tmRNA + S-adenosyl-L-methionine = 5-methyluridine(341) in tmRNA + S-adenosyl-L-homocysteine + H(+). Dual-specificity methyltransferase that catalyzes the formation of 5-methyluridine at position 54 (m5U54) in all tRNAs, and that of position 341 (m5U341) in tmRNA (transfer-mRNA). The polypeptide is tRNA/tmRNA (uracil-C(5))-methyltransferase (Serratia proteamaculans (strain 568)).